Here is a 742-residue protein sequence, read N- to C-terminus: Glycine--tRNA ligase (742 aa).

Residues 73 to 129 (KLAPLRAAVKEYGDLIRDLKAKGAPKIDIDKAVVELKARKRLLEDTEIALAPKEASF) form the WHEP-TRS domain. Glu-309 is a glycine binding site. Residues 341-343 (RNE) and 352-353 (RV) each bind ATP. Position 360 (Glu-360) interacts with glycine. Residue 467–468 (EC) participates in ATP binding. 586–588 (EPS) serves as a coordination point for glycine. ATP is bound at residue Arg-593.

Belongs to the class-II aminoacyl-tRNA synthetase family. As to quaternary structure, homodimer.

The protein localises to the cytoplasm. Its subcellular location is the cell projection. The protein resides in the axon. It is found in the secreted. It localises to the extracellular exosome. The catalysed reaction is tRNA(Gly) + glycine + ATP = glycyl-tRNA(Gly) + AMP + diphosphate. It catalyses the reaction 2 ATP + H(+) = P(1),P(4)-bis(5'-adenosyl) tetraphosphate + diphosphate. Catalyzes the ATP-dependent ligation of glycine to the 3'-end of its cognate tRNA, via the formation of an aminoacyl-adenylate intermediate (Gly-AMP). Also produces diadenosine tetraphosphate (Ap4A), a universal pleiotropic signaling molecule needed for cell regulation pathways, by direct condensation of 2 ATPs. Thereby, may play a special role in Ap4A homeostasis. The protein is Glycine--tRNA ligase of Caenorhabditis elegans.